Consider the following 97-residue polypeptide: Integration host factor subunit alpha (97 aa).

It belongs to the bacterial histone-like protein family. In terms of assembly, heterodimer of an alpha and a beta chain.

This protein is one of the two subunits of integration host factor, a specific DNA-binding protein that functions in genetic recombination as well as in transcriptional and translational control. This is Integration host factor subunit alpha from Histophilus somni (strain 2336) (Haemophilus somnus).